A 226-amino-acid polypeptide reads, in one-letter code: Leucyl/phenylalanyl-tRNA--protein transferase (226 aa).

The protein belongs to the L/F-transferase family.

The protein localises to the cytoplasm. The enzyme catalyses N-terminal L-lysyl-[protein] + L-leucyl-tRNA(Leu) = N-terminal L-leucyl-L-lysyl-[protein] + tRNA(Leu) + H(+). The catalysed reaction is N-terminal L-arginyl-[protein] + L-leucyl-tRNA(Leu) = N-terminal L-leucyl-L-arginyl-[protein] + tRNA(Leu) + H(+). It catalyses the reaction L-phenylalanyl-tRNA(Phe) + an N-terminal L-alpha-aminoacyl-[protein] = an N-terminal L-phenylalanyl-L-alpha-aminoacyl-[protein] + tRNA(Phe). In terms of biological role, functions in the N-end rule pathway of protein degradation where it conjugates Leu, Phe and, less efficiently, Met from aminoacyl-tRNAs to the N-termini of proteins containing an N-terminal arginine or lysine. The chain is Leucyl/phenylalanyl-tRNA--protein transferase from Pseudomonas aeruginosa (strain ATCC 15692 / DSM 22644 / CIP 104116 / JCM 14847 / LMG 12228 / 1C / PRS 101 / PAO1).